The sequence spans 295 residues: Ribosomal RNA small subunit methyltransferase A (295 aa).

Positions 31, 33, 58, 79, 104, and 129 each coordinate S-adenosyl-L-methionine.

The protein belongs to the class I-like SAM-binding methyltransferase superfamily. rRNA adenine N(6)-methyltransferase family. RsmA subfamily.

It localises to the cytoplasm. The enzyme catalyses adenosine(1518)/adenosine(1519) in 16S rRNA + 4 S-adenosyl-L-methionine = N(6)-dimethyladenosine(1518)/N(6)-dimethyladenosine(1519) in 16S rRNA + 4 S-adenosyl-L-homocysteine + 4 H(+). Its function is as follows. Specifically dimethylates two adjacent adenosines (A1518 and A1519) in the loop of a conserved hairpin near the 3'-end of 16S rRNA in the 30S particle. May play a critical role in biogenesis of 30S subunits. In Enterococcus faecalis (strain ATCC 700802 / V583), this protein is Ribosomal RNA small subunit methyltransferase A.